Reading from the N-terminus, the 467-residue chain is Argininosuccinate lyase (467 aa).

The protein belongs to the lyase 1 family. Argininosuccinate lyase subfamily.

The protein localises to the cytoplasm. The catalysed reaction is 2-(N(omega)-L-arginino)succinate = fumarate + L-arginine. The protein operates within amino-acid biosynthesis; L-arginine biosynthesis; L-arginine from L-ornithine and carbamoyl phosphate: step 3/3. The polypeptide is Argininosuccinate lyase (Methylibium petroleiphilum (strain ATCC BAA-1232 / LMG 22953 / PM1)).